Here is a 210-residue protein sequence, read N- to C-terminus: MTFAEELQQILPPDLPHRDAVIASAARHLDLIVETNQHFNLTRIVSPREAAIKHIADSVIPWRLFSGAPHVVDAGSGAGFPGIPLALVLPETRFTLLESTQKKARFIESAAADLGLANVEVRPDRAEDWLKTHRASIVTARAVAPLTRAVGLFAHALRAGARILLYKGPDAEAEIAEAASEAAKRRVHLRVVERYELPDSLGARTIVEIR.

Residues G75, F80, 98 to 100 (EST), 126 to 127 (AE), and R141 contribute to the S-adenosyl-L-methionine site.

This sequence belongs to the methyltransferase superfamily. RNA methyltransferase RsmG family.

It localises to the cytoplasm. Its function is as follows. Specifically methylates the N7 position of a guanine in 16S rRNA. This is Ribosomal RNA small subunit methyltransferase G from Solibacter usitatus (strain Ellin6076).